Reading from the N-terminus, the 188-residue chain is MKLIVGLGNPGKKFLNTRHNIGFVVVDSFLSQNKYQTLKEDTNAHIYQINFNNHQTLLIKPQTYMNLSGEVVKKIINKYRIKIENILVIVDDIYLDEGKLKLKMQGGHGGHNGLRNIIDRLCTKQFKRLKIGVSLDSCMPLDQYLLTPVNASSQKNILKNIDIINKIIFNFIQDVDFNILMNGYNSKH.

Residue F14 participates in tRNA binding. The active-site Proton acceptor is the H19. Residues Y64, N66, and N112 each contribute to the tRNA site.

The protein belongs to the PTH family. Monomer.

The protein localises to the cytoplasm. It catalyses the reaction an N-acyl-L-alpha-aminoacyl-tRNA + H2O = an N-acyl-L-amino acid + a tRNA + H(+). Hydrolyzes ribosome-free peptidyl-tRNAs (with 1 or more amino acids incorporated), which drop off the ribosome during protein synthesis, or as a result of ribosome stalling. Its function is as follows. Catalyzes the release of premature peptidyl moieties from peptidyl-tRNA molecules trapped in stalled 50S ribosomal subunits, and thus maintains levels of free tRNAs and 50S ribosomes. This chain is Peptidyl-tRNA hydrolase, found in Aster yellows witches'-broom phytoplasma (strain AYWB).